The primary structure comprises 307 residues: Aspartate carbamoyltransferase catalytic subunit (307 aa).

The carbamoyl phosphate site is built by Arg-54 and Thr-55. Lys-83 serves as a coordination point for L-aspartate. 3 residues coordinate carbamoyl phosphate: Arg-104, His-132, and Gln-135. L-aspartate is bound by residues Arg-165 and Arg-228. Carbamoyl phosphate contacts are provided by Leu-267 and Pro-268.

This sequence belongs to the aspartate/ornithine carbamoyltransferase superfamily. ATCase family. Heterododecamer (2C3:3R2) of six catalytic PyrB chains organized as two trimers (C3), and six regulatory PyrI chains organized as three dimers (R2).

The enzyme catalyses carbamoyl phosphate + L-aspartate = N-carbamoyl-L-aspartate + phosphate + H(+). Its pathway is pyrimidine metabolism; UMP biosynthesis via de novo pathway; (S)-dihydroorotate from bicarbonate: step 2/3. Functionally, catalyzes the condensation of carbamoyl phosphate and aspartate to form carbamoyl aspartate and inorganic phosphate, the committed step in the de novo pyrimidine nucleotide biosynthesis pathway. The protein is Aspartate carbamoyltransferase catalytic subunit of Clostridium botulinum (strain Alaska E43 / Type E3).